Reading from the N-terminus, the 290-residue chain is 4-diphosphocytidyl-2-C-methyl-D-erythritol kinase (290 aa).

K20 is an active-site residue. P104–S114 contributes to the ATP binding site. The active site involves D146.

This sequence belongs to the GHMP kinase family. IspE subfamily.

It carries out the reaction 4-CDP-2-C-methyl-D-erythritol + ATP = 4-CDP-2-C-methyl-D-erythritol 2-phosphate + ADP + H(+). It functions in the pathway isoprenoid biosynthesis; isopentenyl diphosphate biosynthesis via DXP pathway; isopentenyl diphosphate from 1-deoxy-D-xylulose 5-phosphate: step 3/6. Functionally, catalyzes the phosphorylation of the position 2 hydroxy group of 4-diphosphocytidyl-2C-methyl-D-erythritol. This Shewanella frigidimarina (strain NCIMB 400) protein is 4-diphosphocytidyl-2-C-methyl-D-erythritol kinase.